The following is a 312-amino-acid chain: uncharacterized protein (312 aa).

Basic and acidic residues-rich tracts occupy residues 1–17 (MAKY…EQLE) and 28–39 (PDRDGPRHSAKL). Residues 1 to 39 (MAKYDHLELVRLPEQLERRKHGGGSPPPDRDGPRHSAKL) are disordered.

This is an uncharacterized protein from Sinorhizobium fredii (strain NBRC 101917 / NGR234).